Here is a 438-residue protein sequence, read N- to C-terminus: GDP-mannose 6-dehydrogenase (438 aa).

NAD(+) is bound by residues Tyr10, Val11, Asp30, Lys35, Thr86, and Thr124. GDP-alpha-D-mannuronate is bound by residues Glu161, Lys210, Asn214, His217, Asn225, Tyr256, Tyr257, Arg259, Phe262, and Gly265. Residue Cys268 is part of the active site. Residue Lys271 coordinates NAD(+). Residue Lys324 coordinates GDP-alpha-D-mannuronate. Arg331 is a binding site for NAD(+).

Belongs to the UDP-glucose/GDP-mannose dehydrogenase family.

The catalysed reaction is GDP-alpha-D-mannose + 2 NAD(+) + H2O = GDP-alpha-D-mannuronate + 2 NADH + 3 H(+). The protein operates within glycan biosynthesis; alginate biosynthesis. In terms of biological role, catalyzes the oxidation of guanosine diphospho-D-mannose (GDP-D-mannose) to GDP-D-mannuronic acid, a precursor for alginate polymerization. The alginate layer causes a mucoid phenotype and provides a protective barrier against host immune defenses and antibiotics. This chain is GDP-mannose 6-dehydrogenase (algD), found in Pseudomonas savastanoi pv. phaseolicola (Pseudomonas syringae pv. phaseolicola).